A 470-amino-acid polypeptide reads, in one-letter code: Retinoic acid receptor RXR-gamma (470 aa).

Positions 1 to 145 are modulating; that stretch reads MHLATETAPS…NSPGALTKHI (145 aa). NR C4-type zinc fingers lie at residues 146–166 and 182–206; these read CAIC…CEGC and CRDS…YQKC. The segment at residues 146–211 is a DNA-binding region (nuclear receptor); the sequence is CAICGDRSSG…RYQKCLAMGM (66 aa). Residues 212-235 form a hinge region; that stretch reads KREAVQEERQRSREKSDTEAESTS. The span at 217-229 shows a compositional bias: basic and acidic residues; the sequence is QEERQRSREKSDT. Residues 217–242 are disordered; sequence QEERQRSREKSDTEAESTSSTSEEMP. Residues 238-466 form the NR LBD domain; that stretch reads SEEMPVERIL…TFLMEMLETP (229 aa).

It belongs to the nuclear hormone receptor family. NR2 subfamily. As to quaternary structure, homodimer. Heterodimer; with a rar molecule. Binds DNA preferentially as a rar/rxr heterodimer.

It localises to the nucleus. Receptor for retinoic acid. Retinoic acid receptors bind as heterodimers to their target response elements in response to their ligands, all-trans or 9-cis retinoic acid, and regulate gene expression in various biological processes. The rar/rxr heterodimers bind to the retinoic acid response elements (RARE) composed of tandem 5'-AGGTCA-3' sites known as DR1-DR5. The high affinity ligand for rxrs is 9-cis retinoic acid. In Xenopus laevis (African clawed frog), this protein is Retinoic acid receptor RXR-gamma (rxrg).